The chain runs to 85 residues: Small ribosomal subunit protein bS16 (85 aa).

It belongs to the bacterial ribosomal protein bS16 family.

The sequence is that of Small ribosomal subunit protein bS16 from Pseudomonas syringae pv. tomato (strain ATCC BAA-871 / DC3000).